The chain runs to 159 residues: Probable cyclic pyranopterin monophosphate synthase (159 aa).

Substrate contacts are provided by residues 74–76 (MCH) and 110–111 (ME). Asp125 is an active-site residue.

This sequence belongs to the MoaC family. Homohexamer; trimer of dimers.

The enzyme catalyses (8S)-3',8-cyclo-7,8-dihydroguanosine 5'-triphosphate = cyclic pyranopterin phosphate + diphosphate. The protein operates within cofactor biosynthesis; molybdopterin biosynthesis. Catalyzes the conversion of (8S)-3',8-cyclo-7,8-dihydroguanosine 5'-triphosphate to cyclic pyranopterin monophosphate (cPMP). The sequence is that of Probable cyclic pyranopterin monophosphate synthase from Methanococcoides burtonii (strain DSM 6242 / NBRC 107633 / OCM 468 / ACE-M).